A 137-amino-acid chain; its full sequence is Proofreading thioesterase EntH (137 aa).

Glutamate 63 serves as the catalytic Nucleophile or proton acceptor.

This sequence belongs to the thioesterase PaaI family. As to quaternary structure, homotetramer. Dimer of dimers. Interacts specifically with the aryl carrier protein (ArCP) domain of EntB.

It localises to the cytoplasm. It participates in siderophore biosynthesis; enterobactin biosynthesis. Functionally, required for optimal enterobactin synthesis. Acts as a proofreading enzyme that prevents EntB misacylation by hydrolyzing the thioester bound existing between EntB and wrongly charged molecules. This Salmonella paratyphi B (strain ATCC BAA-1250 / SPB7) protein is Proofreading thioesterase EntH.